The sequence spans 447 residues: Thiol-specific monooxygenase (447 aa).

FAD-binding positions include 13 to 17, glutamate 38, 46 to 47, 91 to 92, and 137 to 138; these read GAGPS, VW, NT, and DV. 90–91 provides a ligand contact to NADP(+); sequence TN. Residue 223–226 coordinates NADP(+); sequence SAND.

The protein belongs to the FMO family. In terms of assembly, monomer. Requires FAD as cofactor.

Functionally, flavin-dependent oxidation of thiol-containing compounds. Probably required for the correct folding of disulfide-bonded proteins. The sequence is that of Thiol-specific monooxygenase (fmo1) from Schizosaccharomyces pombe (strain 972 / ATCC 24843) (Fission yeast).